Reading from the N-terminus, the 369-residue chain is Anhydro-N-acetylmuramic acid kinase (369 aa).

12-19 (GTSLDGVD) is an ATP binding site.

Belongs to the anhydro-N-acetylmuramic acid kinase family.

It catalyses the reaction 1,6-anhydro-N-acetyl-beta-muramate + ATP + H2O = N-acetyl-D-muramate 6-phosphate + ADP + H(+). It functions in the pathway amino-sugar metabolism; 1,6-anhydro-N-acetylmuramate degradation. It participates in cell wall biogenesis; peptidoglycan recycling. In terms of biological role, catalyzes the specific phosphorylation of 1,6-anhydro-N-acetylmuramic acid (anhMurNAc) with the simultaneous cleavage of the 1,6-anhydro ring, generating MurNAc-6-P. Is required for the utilization of anhMurNAc either imported from the medium or derived from its own cell wall murein, and thus plays a role in cell wall recycling. In Escherichia coli (strain SE11), this protein is Anhydro-N-acetylmuramic acid kinase.